The sequence spans 1798 residues: MDSTLRRVVFFSNEFPSDDLKELFRRLDQHSKDRRFRLLSIFLEESTAVLKDEVSKFPRPLKELVPPFDSVLGLVDVDFRQGPLGAAMESSILTILELGLFIGHYESEDTEWDLVPGESVLAGLSIGILAAAAVALSSSLADVAKTGAEAVRVSFRLGVYVADISTKLEAPQSDGTLSSWAHVVTEMTEASVQDELKQFNTDTHSPELTKVFISAADKTSISVSGPPSRIKAAFQHSPVLRYSKSLPLPVYDGLCHASHLYTQSDIDFIINSAESVILPDRSVRLALLSSQTGKPFIAKTASELFLEIGTELLTGTIYLDNVTAGIVQHLQPQSKETSSWQIDSFRTSLVLRGIHSAVEANLSGEQRQLIRRDLVSWVNRDFGPRRPRSYASSKLAIVGMACRLPGGADDLDLFWKLLEEGRDTLTTVPPDRFDLNTHYDPTGKTENATQTPYGNFIDRPGFFDAGFFNMSPREAEQTDPMQRLALVTAYEALEMAGVVPGRTPSTHPSRIGTFYGQASDDWRELNASQNISTYAVPGGERAFGNGRINYFFKFSGPSFNLDTACSSGLAAVQVACSALWAGEVDTAIAGGLNVITDPDNYCGLGNAHFLSKTGQCKVWDKDADGYCRADGIGSVVIKRLEDAEADNDNILAVVLGASTNHSAEAISITHPHAGAQKANYRQVLNQAGVNPIDVSYIELHGTGTQAGDAVESESVSDIFAPVTPRRRPDQRLYLGAVKSNIGHGEAAAGIASLLKALLVYQKNLIPMHIGIKSEINPTIPKDLERRNVGLAMQNTPWPRPAGKKRLAVVNSFGAHGGNTTLLLEDAPERVKIQGTEDRITHAILLSAKSKKSLQANMESLLSYLDQHPETSLADLAYTTSSRRMHHNMRFGTSVSCISGLQKALRSQLDNPNFASEVRPVPNEAPSVILAFTGQGAYYHGMGRGLFTEFPYFRAQVQQLDRLAQRLGFPSVVPVIENSIEDTPSSPILTQLSVVILEIALARFWSLLGVSISAVIGHSLGEYAALAVSGVISTADAIYLVGRRAQLVEERCAQGSHSMLSVRASEDAIQEMLAAEPETALIAYEVSCCNTNQDTVIGGFQGEIDDIRRALEAKSIKCTILDVPYAFHTAQMNPILEDLETLAKAIPFKAPSIPVISPLLATVIYDVKSLNASYLRRATRETVDFAAAIEATQDMGLVDSKTMWIDVGPHPICAGLVRSMIPSAPVMSSCRRNEDSIATISKSLVTLYLAGLNPCWAEFFKPREREYSLLHLPKYRWNETDYWIPYIGTWTLDKAHLKHGTKPTTPFSVSMSRPSALRTSLVHQITAETVRTTTATLHTISDMQHPDFLEAIHGHTMNKCGVATSSIWSDMAFTVGEYLYRRLVPNTKDVHMNLTDVEVLHAQVASKTKGSVQPLVLRAHLDLSTSSMSLSWFNADGETGECAAESFATATILFEDPGAWRKEWARLAHLVLGRIEVLEQRATEGKASRLSKPLAYTLFKNVVDYADRYRGMDSVVLDELEAMAEVTLVPERYGTWHTPPHWIDSVSHLAGLVMNGSEASNTRDYFFVTPGCDSFRLLEKLEPGARYRSYVRMFPLPEDPNMHGGDVYILQGEEIVGVVGMIRFRRVPRLLMDRFFSPPTTTSVAGPVPPLAGATTKCHDIAQTAPALPTPTPPIVVSNPIVSSTLASKALEPAPLLATSSGDSTPKEPPIVTPAESERAGPVDNNMISQCLRLMARETGLEVEALTADASFVQLGVDSLMSLVLSEKFRAELGVEVKSSLFLECPTIGEMTAWIEEYC.

Positions 25 to 256 are N-terminal acylcarrier protein transacylase domain (SAT); the sequence is RRLDQHSKDR…PLPVYDGLCH (232 aa). A Ketosynthase family 3 (KS3) domain is found at 392 to 825; sequence SSKLAIVGMA…GGNTTLLLED (434 aa). Catalysis depends on for beta-ketoacyl synthase activity residues Cys-565, His-700, and His-743. Positions 931-1224 are malonyl-CoA:ACP transacylase (MAT) domain; the sequence is FTGQGAYYHG…LVRSMIPSAP (294 aa). The interval 1322-1458 is N-terminal hotdog fold; the sequence is HQITAETVRT…ATILFEDPGA (137 aa). A PKS/mFAS DH domain is found at 1322–1632; it reads HQITAETVRT…FRRVPRLLMD (311 aa). His-1354 acts as the Proton acceptor; for dehydratase activity in catalysis. The interval 1390–1628 is product template (PT) domain; it reads HMNLTDVEVL…GMIRFRRVPR (239 aa). Residues 1486 to 1632 are C-terminal hotdog fold; the sequence is ASRLSKPLAY…FRRVPRLLMD (147 aa). The Proton donor; for dehydratase activity role is filled by Asp-1543. Residues 1695–1721 form a disordered region; it reads LLATSSGDSTPKEPPIVTPAESERAGP. The 78-residue stretch at 1721-1798 folds into the Carrier domain; sequence PVDNNMISQC…EMTAWIEEYC (78 aa). Position 1758 is an O-(pantetheine 4'-phosphoryl)serine (Ser-1758).

It depends on pantetheine 4'-phosphate as a cofactor.

It participates in secondary metabolite biosynthesis. In terms of biological role, non-reducing polyketide synthase; part of the gene cluster that mediates the biosynthesis of neosartoricin B, a prenylated anthracenone that probably exhibits T-cell antiproliferative activity, suggestive of a physiological role as an immunosuppressive agent. The non-reducing polyketide synthase nscA probably synthesizes and cyclizes the decaketide backbone. The hydrolase nscB then mediates the product release through hydrolysis followed by spontaneous decarboxylation. The prenyltransferase nscD catalyzes the addition of the dimethylallyl group to the aromatic C5. The FAD-dependent monooxygenase nscC is then responsible for the stereospecific hydroxylation at C2. Neosartoricin B can be converted into two additional compounds neosartoricins C and D. Neosartoricin C is a spirocyclic compound that is cyclized through the attack of C3 hydroxyl on C14, followed by dehydration. On the other hand, neosartoricin D is a further cyclized compound in which attack of C2 on C14 in neosartoricin C results in the formation of the acetal-containing dioxabicyclo-octanone ring. Both of these compounds are novel and possibly represent related metabolites of the gene cluster. This chain is Non-reducing polyketide synthase nscA, found in Trichophyton rubrum (strain ATCC MYA-4607 / CBS 118892) (Athlete's foot fungus).